Here is a 548-residue protein sequence, read N- to C-terminus: uncharacterized protein (548 aa).

The DhaL domain maps to 8 to 200 (KLFADMIIQG…LLCVYEGFLK (193 aa)).

This is an uncharacterized protein from Staphylococcus aureus (strain MRSA252).